Here is a 321-residue protein sequence, read N- to C-terminus: Glucokinase (321 aa).

8 to 13 (GDVGGT) is a binding site for ATP.

The protein belongs to the bacterial glucokinase family.

It is found in the cytoplasm. It catalyses the reaction D-glucose + ATP = D-glucose 6-phosphate + ADP + H(+). The chain is Glucokinase from Salmonella choleraesuis (strain SC-B67).